Reading from the N-terminus, the 426-residue chain is Glutamate-1-semialdehyde 2,1-aminomutase (426 aa).

K265 bears the N6-(pyridoxal phosphate)lysine mark.

The protein belongs to the class-III pyridoxal-phosphate-dependent aminotransferase family. HemL subfamily. Homodimer. Requires pyridoxal 5'-phosphate as cofactor.

It localises to the cytoplasm. The catalysed reaction is (S)-4-amino-5-oxopentanoate = 5-aminolevulinate. Its pathway is porphyrin-containing compound metabolism; protoporphyrin-IX biosynthesis; 5-aminolevulinate from L-glutamyl-tRNA(Glu): step 2/2. The chain is Glutamate-1-semialdehyde 2,1-aminomutase from Escherichia coli O9:H4 (strain HS).